A 531-amino-acid polypeptide reads, in one-letter code: Beta-hexosaminidase subunit beta (531 aa).

The first 21 residues, 1-21, serve as a signal peptide directing secretion; that stretch reads MEVLPGLLRLLAALVVAERWA. Cysteines 67 and 111 form a disulfide. 3 N-linked (GlcNAc...) asparagine glycosylation sites follow: Asn120, Asn164, and Asn301. Cystine bridges form between Cys283/Cys334 and Cys508/Cys525. The active-site Proton donor is the Glu329.

This sequence belongs to the glycosyl hydrolase 20 family. There are 3 forms of beta-hexosaminidase: hexosaminidase A is a heterodimer composed of one subunit alpha and one subunit beta (chain A and B); hexosaminidase B is a homodimer of two beta subunits (two chains A and B); hexosaminidase S is a homodimer of two alpha subunits. The composition of the dimer (isozyme A versus isozyme S) has a significant effect on the substrate specificity of the alpha subunit active site.

Its subcellular location is the lysosome. The protein localises to the cytoplasmic vesicle. The protein resides in the secretory vesicle. It is found in the cortical granule. The catalysed reaction is Hydrolysis of terminal non-reducing N-acetyl-D-hexosamine residues in N-acetyl-beta-D-hexosaminides.. It carries out the reaction N-acetyl-beta-D-galactosaminyl-(1-&gt;4)-beta-D-3-sulfogalactosyl-(1-&gt;4)-beta-D-glucosyl-(1&lt;-&gt;1')-ceramide + H2O = a beta-D-3-sulfogalactosyl-(1-&gt;4)-beta-D-glucosyl-(1&lt;-&gt;1')-ceramide + N-acetyl-beta-D-galactosamine. It catalyses the reaction a ganglioside GM2 (d18:1(4E)) + H2O = a ganglioside GM3 (d18:1(4E)) + N-acetyl-beta-D-galactosamine. The enzyme catalyses a ganglioside GM2 + H2O = a ganglioside GM3 + N-acetyl-beta-D-galactosamine. The catalysed reaction is beta-D-GalNAc-(1-&gt;4)-alpha-L-IdoA-(1-&gt;3)-beta-D-GalNAc-4-sulfate-(1-&gt;4)-alpha-L-IdoA-(1-&gt;3)-D-GalNAc-4-sulfate + H2O = alpha-L-IdoA-(1-&gt;3)-beta-D-GalNAc-4-sulfate-(1-&gt;4)-alpha-L-IdoA-(1-&gt;3)-D-GalNAc-4-sulfate + N-acetyl-D-galactosamine. It carries out the reaction N-acetyl-beta-D-6-sulfogalactosaminyl-(1-&gt;4)-alpha-L-iduronyl-(1-&gt;3)-N-acetyl-D-6-sulfogalactosamine + H2O = alpha-L-iduronyl-(1-&gt;3)-N-acetyl-D-6-sulfogalactosamine + N-acetyl-D-6-sulfogalactosamine. Its activity is regulated as follows. Addition of GM2A stimulates the hydrolysis of sulfated glycosphingolipid SM2 and the ganglioside GM2. In terms of biological role, hydrolyzes the non-reducing end N-acetyl-D-hexosamine and/or sulfated N-acetyl-D-hexosamine of glycoconjugates, such as the oligosaccharide moieties from proteins and neutral glycolipids, or from certain mucopolysaccharides. The isozyme B does not hydrolyze each of these substrates, however hydrolyzes efficiently neutral oligosaccharide. Only the isozyme A is responsible for the degradation of GM2 gangliosides in the presence of GM2A. During fertilization is responsible, at least in part, for the zona block to polyspermy. Present in the cortical granules of non-activated oocytes, is exocytosed during the cortical reaction in response to oocyte activation and inactivates the sperm galactosyltransferase-binding site, accounting for the block in sperm binding to the zona pellucida. This Sus scrofa (Pig) protein is Beta-hexosaminidase subunit beta.